A 269-amino-acid polypeptide reads, in one-letter code: CUE domain-containing protein 2-B (269 aa).

Residues 110-130 form a disordered region; the sequence is ASPSEKTATEPLEGAVAQDKD. The 44-residue stretch at 131 to 174 folds into the CUE domain; that stretch reads DPKTGVDLLLEIFPSCTITQAQTALSMAKGDLEDAVQIIVDGKV.

This sequence belongs to the CUEDC2 family. In terms of processing, phosphorylated.

It localises to the cytoplasm. The protein localises to the nucleus. Its function is as follows. May play a role in targeting proteins for ubiquitination and subsequent proteasomal degradation. The chain is CUE domain-containing protein 2-B (cuedc2-b) from Xenopus laevis (African clawed frog).